A 258-amino-acid polypeptide reads, in one-letter code: Phosphate import ATP-binding protein PstB (258 aa).

The 243-residue stretch at 5–247 folds into the ABC transporter domain; that stretch reads IETKDLDIYY…ERIFSNPKEK (243 aa). 37-44 contacts ATP; the sequence is GPSGCGKS.

It belongs to the ABC transporter superfamily. Phosphate importer (TC 3.A.1.7) family. In terms of assembly, the complex is composed of two ATP-binding proteins (PstB), two transmembrane proteins (PstC and PstA) and a solute-binding protein (PstS).

The protein resides in the cell membrane. It carries out the reaction phosphate(out) + ATP + H2O = ADP + 2 phosphate(in) + H(+). Part of the ABC transporter complex PstSACB involved in phosphate import. Responsible for energy coupling to the transport system. The polypeptide is Phosphate import ATP-binding protein PstB (Cutibacterium acnes (strain DSM 16379 / KPA171202) (Propionibacterium acnes)).